The sequence spans 295 residues: Pyridoxal 5'-phosphate synthase subunit PdxS (295 aa).

Position 25 (D25) interacts with D-ribose 5-phosphate. The Schiff-base intermediate with D-ribose 5-phosphate role is filled by K82. G154 is a binding site for D-ribose 5-phosphate. R166 serves as a coordination point for D-glyceraldehyde 3-phosphate. D-ribose 5-phosphate is bound by residues G215 and 236–237 (GS).

It belongs to the PdxS/SNZ family. In the presence of PdxT, forms a dodecamer of heterodimers.

The catalysed reaction is aldehydo-D-ribose 5-phosphate + D-glyceraldehyde 3-phosphate + L-glutamine = pyridoxal 5'-phosphate + L-glutamate + phosphate + 3 H2O + H(+). The protein operates within cofactor biosynthesis; pyridoxal 5'-phosphate biosynthesis. Its function is as follows. Catalyzes the formation of pyridoxal 5'-phosphate from ribose 5-phosphate (RBP), glyceraldehyde 3-phosphate (G3P) and ammonia. The ammonia is provided by the PdxT subunit. Can also use ribulose 5-phosphate and dihydroxyacetone phosphate as substrates, resulting from enzyme-catalyzed isomerization of RBP and G3P, respectively. The sequence is that of Pyridoxal 5'-phosphate synthase subunit PdxS from Bacillus mycoides (strain KBAB4) (Bacillus weihenstephanensis).